We begin with the raw amino-acid sequence, 424 residues long: Protein TUNICAMYCIN INDUCED 1 (424 aa).

A signal peptide spans 1 to 25 (MGHRVLVYVGALFLILFTIFPSSSA). Asn-197, Asn-296, and Asn-406 each carry an N-linked (GlcNAc...) asparagine glycan.

In terms of tissue distribution, restricted to pollen grains at high levels.

It localises to the endoplasmic reticulum. Functionally, involved in the regulation of pollen surface morphology, probably by modulating the secretion of proteins and/or lipids during pollen development. The protein is Protein TUNICAMYCIN INDUCED 1 of Arabidopsis thaliana (Mouse-ear cress).